The sequence spans 210 residues: Imidazole glycerol phosphate synthase subunit HisH (210 aa).

In terms of domain architecture, Glutamine amidotransferase type-1 spans 3-210 (KVALLDYGSG…QLLRNWIDLL (208 aa)). The active-site Nucleophile is the C81. Catalysis depends on residues H191 and E193.

Heterodimer of HisH and HisF.

The protein localises to the cytoplasm. It carries out the reaction 5-[(5-phospho-1-deoxy-D-ribulos-1-ylimino)methylamino]-1-(5-phospho-beta-D-ribosyl)imidazole-4-carboxamide + L-glutamine = D-erythro-1-(imidazol-4-yl)glycerol 3-phosphate + 5-amino-1-(5-phospho-beta-D-ribosyl)imidazole-4-carboxamide + L-glutamate + H(+). The catalysed reaction is L-glutamine + H2O = L-glutamate + NH4(+). It functions in the pathway amino-acid biosynthesis; L-histidine biosynthesis; L-histidine from 5-phospho-alpha-D-ribose 1-diphosphate: step 5/9. In terms of biological role, IGPS catalyzes the conversion of PRFAR and glutamine to IGP, AICAR and glutamate. The HisH subunit catalyzes the hydrolysis of glutamine to glutamate and ammonia as part of the synthesis of IGP and AICAR. The resulting ammonia molecule is channeled to the active site of HisF. In Corynebacterium diphtheriae (strain ATCC 700971 / NCTC 13129 / Biotype gravis), this protein is Imidazole glycerol phosphate synthase subunit HisH.